The primary structure comprises 479 residues: Aspartyl/glutamyl-tRNA(Asn/Gln) amidotransferase subunit B (479 aa).

Belongs to the GatB/GatE family. GatB subfamily. Heterotrimer of A, B and C subunits.

The catalysed reaction is L-glutamyl-tRNA(Gln) + L-glutamine + ATP + H2O = L-glutaminyl-tRNA(Gln) + L-glutamate + ADP + phosphate + H(+). It carries out the reaction L-aspartyl-tRNA(Asn) + L-glutamine + ATP + H2O = L-asparaginyl-tRNA(Asn) + L-glutamate + ADP + phosphate + 2 H(+). Its function is as follows. Allows the formation of correctly charged Asn-tRNA(Asn) or Gln-tRNA(Gln) through the transamidation of misacylated Asp-tRNA(Asn) or Glu-tRNA(Gln) in organisms which lack either or both of asparaginyl-tRNA or glutaminyl-tRNA synthetases. The reaction takes place in the presence of glutamine and ATP through an activated phospho-Asp-tRNA(Asn) or phospho-Glu-tRNA(Gln). The sequence is that of Aspartyl/glutamyl-tRNA(Asn/Gln) amidotransferase subunit B from Geotalea daltonii (strain DSM 22248 / JCM 15807 / FRC-32) (Geobacter daltonii).